Consider the following 217-residue polypeptide: Lectin ADEL (217 aa).

5 disulfide bridges follow: cysteine 5–cysteine 187, cysteine 42–cysteine 68, cysteine 61–cysteine 77, cysteine 114–cysteine 135, and cysteine 142–cysteine 206. An N-linked (GlcNAc...) asparagine glycan is attached at asparagine 30. 2 N-linked (GlcNAc...) asparagine glycosylation sites follow: asparagine 102 and asparagine 126.

In terms of assembly, homodimer; disulfide-linked. Contains disulfide bonds.

Binds in decreasing order of affinity: galacturonic acid, D-galactosamine, methyl-alpha-D-galactopyranoside and further galactose-containing carbohydrates. Has hemagglutinating activity against human and rabbit erythrocytes. This chain is Lectin ADEL, found in Aplysia dactylomela (Spotted sea hare).